The sequence spans 227 residues: MAKQKQQYVTIKGTKDGLTLYLDDRCSYDDLMKEIEERLVKRSSVAANSPLVSVHLKVGNRYLTPAQEEELRALIRRSKNLVVDSIESNVISKAEAIEWVQKTEIVTVSRIVRSGQVLHVEGDLLLLGDVNPGGTVIAGGNIFILGALRGIAHAGYAGNKEAIIAASVMKPMQLRIGDVMNRAPDYKTDERNEMECAYINEHNQIVVDRLQLLMHLRPNLTRLERRM.

It belongs to the MinC family. As to quaternary structure, interacts with MinD and FtsZ.

Cell division inhibitor that blocks the formation of polar Z ring septums. Rapidly oscillates between the poles of the cell to destabilize FtsZ filaments that have formed before they mature into polar Z rings. Prevents FtsZ polymerization. The protein is Probable septum site-determining protein MinC of Geobacillus thermodenitrificans (strain NG80-2).